The primary structure comprises 714 residues: A-kinase anchor protein 5 (714 aa).

Disordered regions lie at residues 1 to 146 (METS…GYVR) and 243 to 333 (VLEN…VGHT). Residues 1–164 (METSVSEIQI…EIKAQIQPDE (164 aa)) are essential to the intracellular anchoring function. Ser-4 and Ser-22 each carry phosphoserine. A compositionally biased stretch (basic and acidic residues) spans 10 to 32 (IETKDEKRPEAASPQKERQERKT). A lipid anchor (S-palmitoyl cysteine) is attached at Cys-36. The segment covering 37–50 (FKRRKKVNKKKAKA) has biased composition (basic residues). 2 stretches are compositionally biased toward basic and acidic residues: residues 54-63 (TAEETEKHAP) and 88-100 (KPSE…KPSE). The AKAP CaM-binding signature appears at 74–94 (AGAWASIKRLVTHRKPSESAE). A lipid anchor (S-palmitoyl cysteine) is attached at Cys-123. Polar residues predominate over residues 243–268 (VLENSAADSPQPVTSTAPLSPATTHQ). Positions 285–301 (GKDDGRRKTAAEEKKSG) are enriched in basic and acidic residues. The 1; approximate repeat unit spans residues 305 to 312 (LGQAEEAS). The interval 305-597 (LGQAEEASSV…PIVGQAEETV (293 aa)) is 28 X 8 AA repeats of V-G-Q-A-E-E-A-T. Residues 310–323 (EASSVSQADKSVLS) are compositionally biased toward polar residues. A 2; approximate repeat occupies 322-329 (LSQAEEAT). The 3; approximate repeat unit spans residues 330–337 (VGHTEEAT). One copy of the 4; approximate repeat lies at 350 to 357 (LSQAEEAT). A 5; approximate repeat occupies 358-365 (VAQAKETV). One copy of the 6; approximate repeat lies at 366 to 373 (LSQAEEVK). One copy of the 7; approximate repeat lies at 398–405 (VSQAEEAI). Residues 414–421 (MGQAEEAT) form an 8; approximate repeat. Tandem repeats lie at residues 430-437 (VGQAEEAT), 438-445 (VGQAEEAT), 446-453 (VGQAEEAT), 454-461 (VGQAEEAT), and 462-469 (VGQAEEAT). A 14; approximate repeat occupies 470-477 (VGQAGEAT). A 15; approximate repeat occupies 486 to 493 (VGQAEEAI). Repeat copies occupy residues 494-501 (VGQAEEAT), 502-509 (VGQAEEAT), 510-517 (VGQAEEAT), and 518-525 (VGQAEEAT). The stretch at 526–533 (VDQAEEAT) is one 20; approximate repeat. Repeat 21 spans residues 534-541 (VGQAEEAT). Residues 542–549 (VGQAGEAA) form a 22; approximate repeat. A 23; approximate repeat occupies 550–557 (VGQAEEAI). The stretch at 558 to 565 (VAQAEEAT) is one 24; approximate repeat. The stretch at 566–573 (VGQAGEAT) is repeat 25. Residues 574–581 (VGQAEKAT) form a 26; approximate repeat. Residues 582 to 589 (VGQAEEPI) form a 27; approximate repeat. Residues 590 to 597 (VGQAEETV) form a 28; approximate repeat. Residues 675-696 (YETLLIETASSLVKNAIELSVE) form an RII-beta subunit binding domain region. Positions 697 to 714 (QLVNEMVSEDNQINTLFQ) are tethers NFATC2 to CRAC channels.

As to quaternary structure, binding protein for dimer of the RII-beta regulatory subunit of cAMP-dependent protein kinase (PKA) and also for the protein kinase C (PKC) and the phosphatase calcineurin (PP2B). Each enzyme is inhibited when bound to the anchoring protein. Also binds the beta2-adrenergic receptor. Part of a complex containing AKAP5, ADCY5, ADCY6 and PDE4C. Interacts with ADCY8, and enhances its phosphorylation at lipid rafts. Interacts with ORAI1 (isoform alpha) (via N-terminus) upon store depletion and in response to LTC4. Does not interact with ORAI2 and ORAI3 paralogs. Interacts (via leucine zipper domain) with NFATC2/NFAT1. Interacts with calmodulin; the interaction is calcium-independent. Interacts with KCNQ2; the interaction may help KCNQ2 channel complex to retain calcium-bound calmodulin. Interacts with KCNK2; the channel is recruited to postsynaptic microdomains by AKAP5 where it can integrate neurotransmitter receptor signals. Part of a complex composed of AKAP5 and ADRB2. Post-translationally, palmitoylated. Palmitoylation at Cys-36 and Cys-123 plays a key role in the targeting of AKAP5 to lipid rafts. Palmitoylation by ZDHHC2 is required for AKAP5 function in LTP-stimulated recycling endosome exocytosis.

Its subcellular location is the postsynaptic recycling endosome membrane. It localises to the cell projection. The protein localises to the dendrite. The protein resides in the postsynaptic cell membrane. Its function is as follows. Multivalent scaffold protein that anchors the cAMP-dependent protein kinase/PKA to cytoskeletal and/or organelle-associated proteins, targeting the signal carried by cAMP to specific intracellular effectors. Association with the beta2-adrenergic receptor (beta2-AR) not only regulates beta2-AR signaling pathway, but also the activation by PKA by switching off the beta2-AR signaling cascade. Plays a role in long term synaptic potentiation by regulating protein trafficking from the dendritic recycling endosomes to the plasma membrane and controlling both structural and functional plasticity at excitatory synapses. In hippocampal pyramidal neurons, recruits KCNK2/TREK-1 channel at postsynaptic dense bodies microdomains and converts it to a leak channel no longer sensitive to stimulation by arachidonic acid, acidic pH or mechanical stress, nor inhibited by Gq-coupled receptors but still under the negative control of Gs-coupled receptors. Associates with ORAI1 pore-forming subunit of CRAC channels in Ca(2+) signaling microdomains where it recruits NFATC2/NFAT1 and couples store-operated Ca(2+) influx to calmodulin and calcineurin signaling and activation of NFAT-dependent transcriptional responses. This is A-kinase anchor protein 5 (Akap5) from Rattus norvegicus (Rat).